The following is a 308-amino-acid chain: Aspartate carbamoyltransferase catalytic subunit (308 aa).

Residues Arg55 and Thr56 each contribute to the carbamoyl phosphate site. Lys83 contacts L-aspartate. Residues Arg105, His133, and Gln136 each contribute to the carbamoyl phosphate site. Residues Arg166 and Arg220 each contribute to the L-aspartate site. Positions 261 and 262 each coordinate carbamoyl phosphate.

It belongs to the aspartate/ornithine carbamoyltransferase superfamily. ATCase family. As to quaternary structure, heterododecamer (2C3:3R2) of six catalytic PyrB chains organized as two trimers (C3), and six regulatory PyrI chains organized as three dimers (R2).

The catalysed reaction is carbamoyl phosphate + L-aspartate = N-carbamoyl-L-aspartate + phosphate + H(+). It functions in the pathway pyrimidine metabolism; UMP biosynthesis via de novo pathway; (S)-dihydroorotate from bicarbonate: step 2/3. Functionally, catalyzes the condensation of carbamoyl phosphate and aspartate to form carbamoyl aspartate and inorganic phosphate, the committed step in the de novo pyrimidine nucleotide biosynthesis pathway. The polypeptide is Aspartate carbamoyltransferase catalytic subunit (Chlorobium limicola (strain DSM 245 / NBRC 103803 / 6330)).